Here is a 149-residue protein sequence, read N- to C-terminus: 3-dehydroquinate dehydratase (149 aa).

The Proton acceptor role is filled by Tyr-26. Substrate-binding residues include Asn-77, His-83, and Asp-90. Residue His-103 is the Proton donor of the active site. Substrate-binding positions include 104–105 (LS) and Arg-114.

It belongs to the type-II 3-dehydroquinase family. In terms of assembly, homododecamer.

The enzyme catalyses 3-dehydroquinate = 3-dehydroshikimate + H2O. It functions in the pathway metabolic intermediate biosynthesis; chorismate biosynthesis; chorismate from D-erythrose 4-phosphate and phosphoenolpyruvate: step 3/7. Functionally, catalyzes a trans-dehydration via an enolate intermediate. This Psychromonas ingrahamii (strain DSM 17664 / CCUG 51855 / 37) protein is 3-dehydroquinate dehydratase.